The following is a 200-amino-acid chain: UPF0301 protein Veis_1517 (200 aa).

This sequence belongs to the UPF0301 (AlgH) family.

This chain is UPF0301 protein Veis_1517, found in Verminephrobacter eiseniae (strain EF01-2).